Consider the following 496-residue polypeptide: COP9 signalosome complex subunit 3 (496 aa).

The 169-residue stretch at 243-411 (QASHCLGIVI…GNETTTMLRF (169 aa)) folds into the PCI domain. The interval 468-496 (GSSERSGVVGSTEADGGGDLDEDLMGDGR) is disordered. Residues 483-496 (GGGDLDEDLMGDGR) show a composition bias toward acidic residues.

This sequence belongs to the CSN3 family. In terms of assembly, component of the COP9 signalosome (CSN) complex.

It localises to the cytoplasm. It is found in the nucleus. In terms of biological role, component of the COP9 signalosome (CSN) complex that acts as an regulator of the ubiquitin (Ubl) conjugation pathway by mediating the deneddylation of the cullin subunit of SCF-type E3 ubiquitin-protein ligase complexes. The CSN complex seems to link protein degradation to sexual development. The polypeptide is COP9 signalosome complex subunit 3 (csnC) (Emericella nidulans (strain FGSC A4 / ATCC 38163 / CBS 112.46 / NRRL 194 / M139) (Aspergillus nidulans)).